A 156-amino-acid polypeptide reads, in one-letter code: Snaclec rhinocetin subunit alpha (156 aa).

The signal sequence occupies residues 1–23 (MGRFIFLSSGWLVVFLSLSGTGA). 3 disulfide bridges follow: Cys27–Cys38, Cys55–Cys150, and Cys125–Cys142. Positions 34-151 (YEGHCYKFFF…CGDNYPFVCM (118 aa)) constitute a C-type lectin domain.

This sequence belongs to the snaclec family. As to quaternary structure, heterodimer; disulfide-linked. As to expression, expressed by the venom gland.

It is found in the secreted. Antagonist of the alpha-2 subunit of the integrin alpha-2/beta-1 (ITGA2/ITGB1) on human platelets and endothelial cells. This protein inhibits collagen-stimulated activation of human platelets in a dose-dependent manner. In addition, it antagonizes the binding of monoclonal antibodies against the alpha-2 subunit of integrin alpha-2/beta-1 to platelets and it coimmunoprecipitates with this integrin. The sequence is that of Snaclec rhinocetin subunit alpha from Bitis rhinoceros (West African gaboon viper).